The primary structure comprises 83 residues: Exodeoxyribonuclease 7 small subunit (83 aa).

It belongs to the XseB family. As to quaternary structure, heterooligomer composed of large and small subunits.

It is found in the cytoplasm. It catalyses the reaction Exonucleolytic cleavage in either 5'- to 3'- or 3'- to 5'-direction to yield nucleoside 5'-phosphates.. Bidirectionally degrades single-stranded DNA into large acid-insoluble oligonucleotides, which are then degraded further into small acid-soluble oligonucleotides. This chain is Exodeoxyribonuclease 7 small subunit, found in Afipia carboxidovorans (strain ATCC 49405 / DSM 1227 / KCTC 32145 / OM5) (Oligotropha carboxidovorans).